We begin with the raw amino-acid sequence, 329 residues long: Phosphate acyltransferase (329 aa).

Belongs to the PlsX family. As to quaternary structure, homodimer. Probably interacts with PlsY.

It is found in the cytoplasm. It catalyses the reaction a fatty acyl-[ACP] + phosphate = an acyl phosphate + holo-[ACP]. It participates in lipid metabolism; phospholipid metabolism. Catalyzes the reversible formation of acyl-phosphate (acyl-PO(4)) from acyl-[acyl-carrier-protein] (acyl-ACP). This enzyme utilizes acyl-ACP as fatty acyl donor, but not acyl-CoA. The polypeptide is Phosphate acyltransferase (Campylobacter lari (strain RM2100 / D67 / ATCC BAA-1060)).